Reading from the N-terminus, the 444-residue chain is ATP-dependent RNA helicase DBP8 (444 aa).

The Q motif motif lies at glutamine 3 to serine 31. The 177-residue stretch at isoleucine 34–proline 210 folds into the Helicase ATP-binding domain. An ATP-binding site is contributed by alanine 47–threonine 54. The DEAD box motif lies at aspartate 156–aspartate 159. Residues tyrosine 244–valine 390 form the Helicase C-terminal domain. The segment covering lysine 402 to arginine 418 has biased composition (basic and acidic residues). The disordered stretch occupies residues lysine 402 to serine 444. The segment covering arginine 434 to serine 444 has biased composition (basic residues).

The protein belongs to the DEAD box helicase family. DDX49/DBP8 subfamily.

Its subcellular location is the nucleus. It is found in the nucleolus. The catalysed reaction is ATP + H2O = ADP + phosphate + H(+). Its function is as follows. ATP-binding RNA helicase involved in 40S ribosomal subunit biogenesis and is required for the normal formation of 18S rRNAs through pre-rRNA processing at A0, A1 and A2 sites. Required for vegetative growth. In Lodderomyces elongisporus (strain ATCC 11503 / CBS 2605 / JCM 1781 / NBRC 1676 / NRRL YB-4239) (Yeast), this protein is ATP-dependent RNA helicase DBP8 (DBP8).